Reading from the N-terminus, the 391-residue chain is Genome polyprotein (391 aa).

Residues 127 to 145 (NVGEQQKSKDKESRQRDQE) show a composition bias toward basic and acidic residues. Residues 127–165 (NVGEQQKSKDKESRQRDQEGENSNRQIIPDRDINAGTTG) form a disordered region.

This sequence belongs to the potyviridae genome polyprotein family. In terms of processing, genome polyprotein of potyviruses undergoes post-translational proteolytic processing by the main proteinase NIa-pro resulting in the production of at least ten individual proteins. The P1 proteinase and the HC-pro cleave only their respective C-termini autocatalytically. 6K1 is essential for proper proteolytic separation of P3 from CI.

The protein localises to the virion. The catalysed reaction is RNA(n) + a ribonucleoside 5'-triphosphate = RNA(n+1) + diphosphate. Its function is as follows. An RNA-dependent RNA polymerase that plays an essential role in the virus replication. Involved in aphid transmission, cell-to-cell and systemis movement, encapsidation of the viral RNA and in the regulation of viral RNA amplification. The chain is Genome polyprotein from Clover yellow vein virus.